The chain runs to 151 residues: Transcriptional repressor NrdR (151 aa).

Residues 1-21 are disordered; it reads MRCPFCGEADTQVKDSRPTED. A zinc finger spans residues 3-34; sequence CPFCGEADTQVKDSRPTEDGAAIRRRRFCPQC. The segment covering 11 to 21 has biased composition (basic and acidic residues); that stretch reads TQVKDSRPTED. One can recognise an ATP-cone domain in the interval 49-139; it reads LVVVKADQRR…VYRDFREAKD (91 aa).

It belongs to the NrdR family. The cofactor is Zn(2+).

In terms of biological role, negatively regulates transcription of bacterial ribonucleotide reductase nrd genes and operons by binding to NrdR-boxes. The protein is Transcriptional repressor NrdR of Acidiphilium cryptum (strain JF-5).